Reading from the N-terminus, the 984-residue chain is Detocs histidine-protein kinase DtcA (984 aa).

A Phosphohistidine; by autocatalysis modification is found at histidine 645.

Post-translationally, autophosphorylated.

The catalysed reaction is ATP + protein L-histidine = ADP + protein N-phospho-L-histidine.. Functionally, sensor-kinase member of the two-component regulatory system Detocs that confers resistance to bacteriophage. When the system (DtcA-DtcB-DtcC) is expressed in a susceptible E.coli (strain MG1655) it confers resistance to bacteriophages T2, T4, T5, T6 and SECphi27. Detocs inhibits T5 infection leading to growth arrest but not complete cell lysis, during SECphi27 infection leads to cell lysis. DtcA (this subunit) probably autophosphorylates upon sensing viral infection, and subsequently transfers the phosphate signal to DtcC which activates it, leading to an antiviral defense; DtcB may scavenge phosphorylation signals from accidental activation of DtcA. This Vibrio alginolyticus protein is Detocs histidine-protein kinase DtcA.